The following is a 1217-amino-acid chain: Inactive disease resistance protein RPS4 (1217 aa).

The 162-residue stretch at Pro-14–Leu-175 folds into the TIR domain. Glu-88 is an active-site residue. Residues Glu-211 to Glu-472 form the NB-ARC domain. LRR repeat units follow at residues His-260–Glu-285, Pro-436–Asp-459, Leu-614–Pro-636, Ile-637–Thr-659, Ala-682–Met-706, Met-708–Leu-728, Ile-729–Ser-749, Asp-750–Arg-774, Leu-796–Ile-818, Ser-819–Tyr-842, and Leu-861–Cys-887. Residues Thr-1162 to Thr-1195 form a disordered region. The short motif at Lys-1170 to Met-1177 is the Nuclear localization signal element.

In terms of assembly, interacts with EDS1.

Its subcellular location is the nucleus. The catalysed reaction is NAD(+) + H2O = ADP-D-ribose + nicotinamide + H(+). The polypeptide is Inactive disease resistance protein RPS4 (RPS4) (Arabidopsis thaliana (Mouse-ear cress)).